The primary structure comprises 383 residues: Probable disease resistance protein At4g19060 (383 aa).

The tract at residues 36-84 (YEKWSSGKQRGSSSKHGNQSTHGDSSPTRNSSGSSKKGRPKANRVETSS) is disordered. Positions 41–70 (SGKQRGSSSKHGNQSTHGDSSPTRNSSGSS) are enriched in polar residues. 2 NB-ARC domains span residues 75-184 (PKAN…MFKH) and 207-281 (VKEK…LAKA). 121–128 (GKYGVGKT) lines the ATP pocket.

In terms of biological role, possible disease resistance protein. In Arabidopsis thaliana (Mouse-ear cress), this protein is Probable disease resistance protein At4g19060.